Consider the following 434-residue polypeptide: MEEVSPAIAGPFRPFSETQMDFTGIRLGKGYCNNQYSNQDSENGDLMVSLPETSSCSVSGSHGSESRKVLISRINSPNLNMKESAAADIVVVDISAGDEINGSDITSEKKMISRTESRSLFEFKSVPLYGFTSICGRRPEMEDAVSTIPRFLQSSSGSMLDGRFDPQSAAHFFGVYDGHGGSQVANYCRERMHLALAEEIAKEKPMLCDGDTWLEKWKKALFNSFLRVDSEIESVAPETVGSTSVVAVVFPSHIFVANCGDSRAVLCRGKTALPLSVDHKPDREDEAARIEAAGGKVIQWNGARVFGVLAMSRSIGDRYLKPSIIPDPEVTAVKRVKEDDCLILASDGVWDVMTDEEACEMARKRILLWHKKNAVAGDASLLADERRKEGKDPAAMSAAEYLSKLAIQRGSKDNISVVVVDLKPRRKLKSKPLN.

A PPM-type phosphatase domain is found at 128–422 (LYGFTSICGR…DNISVVVVDL (295 aa)). Positions 177, 261, 262, 347, and 413 each coordinate Mg(2+). The Nuclear localization signal motif lies at 423–427 (KPRRK).

It belongs to the PP2C family. As to quaternary structure, interacts with SPK1, ATHB-6, CIPK15/PKS3, GPX3, SRK2E/OST1, SRK2D, SRK2I, SCAR1, SCAR2, SCAR3 and SCARL. Binds to the PA released by the phospholipase D alpha 1 (PLDALPHA1) in response to ABA during the stomatal closure regulation. Interacts with ABA-bounded PYR1, PYL1, PYL2, PYL3, PYL4, PYL5, PYL6, PYL7, PYL8, PYL9, PYL10, and with free PYL2, PYL3, PYL4 and PYL13. Binds to RPL12B, CPK21 and CPK23. Binds to MAPKKK18. Interacts with KIN10. Interacts with phosphorylated PYL8/RCAR3. Mg(2+) is required as a cofactor. Mn(2+) serves as cofactor. In terms of tissue distribution, expressed in seeds and seedlings. In roots, confined to lateral root caps and columella cells.

It localises to the nucleus. The protein localises to the cytoplasm. It is found in the cell membrane. The enzyme catalyses O-phospho-L-seryl-[protein] + H2O = L-seryl-[protein] + phosphate. It carries out the reaction O-phospho-L-threonyl-[protein] + H2O = L-threonyl-[protein] + phosphate. Its activity is regulated as follows. Phosphatase activity repressed by oxidized GPX3 and phosphatidic acid (PA). PA is produced by PLD alpha 1 in response to ABA. Repressed by PYR/PYL/RCAR ABA receptors in an ABA-dependent manner. Functionally, key component and repressor of the abscisic acid (ABA) signaling pathway that regulates numerous ABA responses, such as stomatal closure, osmotic water permeability of the plasma membrane (Pos), drought-induced resistance and rhizogenesis, response to glucose, high light stress, seed germination and inhibition of vegetative growth. During the stomatal closure regulation, modulates the inward calcium-channel permeability as well as the actin reorganization in guard cells in response to ABA. Involved in the resistance to the bacterial pathogen Pseudomonas syringae pv. tomato. Controls negatively fibrillin expression that is involved in mediating ABA-induced photoprotection. May be involved in ABA content regulation. Plays a role in the Pro accumulation in response to reduced water availability (low water potential). Required for the ABA negative regulation of the ethylene-induced hyponastic growth. Involved in acquired thermotolerance of root growth and seedling survival. Activates/represses SRK2E/OST1 in response to ABA-dependent stimuli, especially in stomata closure regulation involving SLAC1. Represses MAPKKK18 activity and promotes MAPKKK18 degradation by the proteasome pathway upon abscisic acid (ABA) treatment. Represses KIN10 activity by the specific dephosphorylation of its T-loop Thr-198, leading to a poststress inactivation of SnRK1 signaling. Restricts MAPKKK20 activity by dephosphorylation. The chain is Protein phosphatase 2C 56 from Arabidopsis thaliana (Mouse-ear cress).